A 293-amino-acid polypeptide reads, in one-letter code: Phosphatidate cytidylyltransferase (293 aa).

Helical transmembrane passes span 6–26 (IISA…GGWY), 51–71 (IAPA…SATV), 73–93 (PHLT…YLLF), 97–117 (MATI…GYLP), 157–177 (LLVT…AYIM), 195–215 (VEGS…GAWY), 218–238 (WPYW…VSLL), and 273–293 (VFTA…LNNL).

It belongs to the CDS family.

It localises to the cell membrane. The catalysed reaction is a 1,2-diacyl-sn-glycero-3-phosphate + CTP + H(+) = a CDP-1,2-diacyl-sn-glycerol + diphosphate. It functions in the pathway phospholipid metabolism; CDP-diacylglycerol biosynthesis; CDP-diacylglycerol from sn-glycerol 3-phosphate: step 3/3. The sequence is that of Phosphatidate cytidylyltransferase (cdsA) from Synechocystis sp. (strain ATCC 27184 / PCC 6803 / Kazusa).